A 347-amino-acid polypeptide reads, in one-letter code: tRNA dimethylallyltransferase (347 aa).

Position 20-27 (20-27 (GPTASGKT)) interacts with ATP. 22-27 (TASGKT) serves as a coordination point for substrate. Interaction with substrate tRNA stretches follow at residues 45-48 (DSAM), 169-173 (QRLMR), and 275-280 (RCVGYR).

This sequence belongs to the IPP transferase family. As to quaternary structure, monomer. It depends on Mg(2+) as a cofactor.

The catalysed reaction is adenosine(37) in tRNA + dimethylallyl diphosphate = N(6)-dimethylallyladenosine(37) in tRNA + diphosphate. Functionally, catalyzes the transfer of a dimethylallyl group onto the adenine at position 37 in tRNAs that read codons beginning with uridine, leading to the formation of N6-(dimethylallyl)adenosine (i(6)A). This is tRNA dimethylallyltransferase from Marinobacter nauticus (strain ATCC 700491 / DSM 11845 / VT8) (Marinobacter aquaeolei).